A 414-amino-acid chain; its full sequence is Lipoyl synthase, mitochondrial (414 aa).

Residues 1–31 (MAVSTSHFRSLCASRPLSRTAIVGHISCRSY) constitute a mitochondrion transit peptide. Residues 31 to 51 (YATTEPSPSATSTSTTTTARR) are disordered. Residues 32–48 (ATTEPSPSATSTSTTTT) are compositionally biased toward low complexity. Cysteine 131, cysteine 136, cysteine 142, cysteine 162, cysteine 166, cysteine 169, and serine 377 together coordinate [4Fe-4S] cluster. A Radical SAM core domain is found at 145–366 (GSDKSAATAT…RQRALDMGFL (222 aa)).

Belongs to the radical SAM superfamily. Lipoyl synthase family. [4Fe-4S] cluster is required as a cofactor.

Its subcellular location is the mitochondrion. It catalyses the reaction [[Fe-S] cluster scaffold protein carrying a second [4Fe-4S](2+) cluster] + N(6)-octanoyl-L-lysyl-[protein] + 2 oxidized [2Fe-2S]-[ferredoxin] + 2 S-adenosyl-L-methionine + 4 H(+) = [[Fe-S] cluster scaffold protein] + N(6)-[(R)-dihydrolipoyl]-L-lysyl-[protein] + 4 Fe(3+) + 2 hydrogen sulfide + 2 5'-deoxyadenosine + 2 L-methionine + 2 reduced [2Fe-2S]-[ferredoxin]. It functions in the pathway protein modification; protein lipoylation via endogenous pathway; protein N(6)-(lipoyl)lysine from octanoyl-[acyl-carrier-protein]: step 2/2. Its function is as follows. Catalyzes the radical-mediated insertion of two sulfur atoms into the C-6 and C-8 positions of the octanoyl moiety bound to the lipoyl domains of lipoate-dependent enzymes, thereby converting the octanoylated domains into lipoylated derivatives. The protein is Lipoyl synthase, mitochondrial of Aspergillus fumigatus (strain CBS 144.89 / FGSC A1163 / CEA10) (Neosartorya fumigata).